Here is a 734-residue protein sequence, read N- to C-terminus: Cullin-4 (734 aa).

In terms of domain architecture, Cullin neddylation spans 666–728; the sequence is DRQFELQASI…KEYLEREDND (63 aa). K680 participates in a covalent cross-link: Glycyl lysine isopeptide (Lys-Gly) (interchain with G-Cter in NEDD8).

It belongs to the cullin family. In terms of assembly, component of the Clr4 methyltransferase complex (ClrC) composed of at least clr4, rik1, pcu4, rbx1, raf1 and raf2. The cullin pcu4, rik1, raf1, raf2 and the ring-box protein rbx1 are components of an E3 ubiquitin ligase, whose activity is essential for heterochromatin assembly. Post-translationally, neddylated; enhancing the ubiquitin-ligase activity.

The protein localises to the cytoplasm. Its subcellular location is the nucleus. It localises to the chromosome. The protein operates within protein modification; protein ubiquitination. Required, indirectly, for activation of ribonucleotide reductase through the degradation of the protein spd1, thereby supplying deoxyribonucleotides for DNA replication and repair. Also has a role as a scaffold for assembling ubiquitin ligases. Component of the Clr4 methyltransferase complex (ClrC) which contributes to the establishment of heterochromatin by specifically methylating histone H3 to form H3K9me. ClrC preferentially ubiquitylates H3K14 and ClrC-mediated H3 ubiquitination promotes clr4 methyltransferase activity for the methylation of H3K9. H3K9me represents a specific tag for epigenetic transcriptional repression by recruiting swi6/HP1 to methylated histones which leads to transcriptional silencing within centromeric heterochromatin, telomeric regions and at the silent mating-type loci. In Schizosaccharomyces pombe (strain 972 / ATCC 24843) (Fission yeast), this protein is Cullin-4 (pcu4).